The chain runs to 190 residues: Elongation factor P 2 (190 aa).

This sequence belongs to the elongation factor P family.

It localises to the cytoplasm. It functions in the pathway protein biosynthesis; polypeptide chain elongation. In terms of biological role, involved in peptide bond synthesis. Stimulates efficient translation and peptide-bond synthesis on native or reconstituted 70S ribosomes in vitro. Probably functions indirectly by altering the affinity of the ribosome for aminoacyl-tRNA, thus increasing their reactivity as acceptors for peptidyl transferase. This chain is Elongation factor P 2 (efp2), found in Chlamydia trachomatis serovar D (strain ATCC VR-885 / DSM 19411 / UW-3/Cx).